A 130-amino-acid chain; its full sequence is Sulfurtransferase TusD (130 aa).

Catalysis depends on Cys80, which acts as the Cysteine persulfide intermediate.

It belongs to the DsrE/TusD family. As to quaternary structure, heterohexamer, formed by a dimer of trimers. The hexameric TusBCD complex contains 2 copies each of TusB, TusC and TusD. The TusBCD complex interacts with TusE.

It localises to the cytoplasm. Part of a sulfur-relay system required for 2-thiolation of 5-methylaminomethyl-2-thiouridine (mnm(5)s(2)U) at tRNA wobble positions. Accepts sulfur from TusA and transfers it in turn to TusE. The polypeptide is Sulfurtransferase TusD (Proteus mirabilis (strain HI4320)).